Reading from the N-terminus, the 28-residue chain is Phospholipase A2 2 (28 aa).

This sequence belongs to the phospholipase A2 family. Group I subfamily. Ca(2+) is required as a cofactor. Expressed by the venom gland.

The protein localises to the secreted. It catalyses the reaction a 1,2-diacyl-sn-glycero-3-phosphocholine + H2O = a 1-acyl-sn-glycero-3-phosphocholine + a fatty acid + H(+). In terms of biological role, snake venom phospholipase A2 (PLA2) that inhibits neuromuscular transmission by blocking acetylcholine release from the nerve termini. PLA2 catalyzes the calcium-dependent hydrolysis of the 2-acyl groups in 3-sn-phosphoglycerides. The chain is Phospholipase A2 2 from Micrurus nigrocinctus (Central American coral snake).